Consider the following 96-residue polypeptide: Large ribosomal subunit protein bL27 (96 aa).

A propeptide spanning residues 1–9 is cleaved from the precursor; the sequence is MLRLDLQFF.

The protein belongs to the bacterial ribosomal protein bL27 family. In terms of processing, the N-terminus is cleaved by ribosomal processing cysteine protease Prp.

This chain is Large ribosomal subunit protein bL27, found in Geobacillus kaustophilus (strain HTA426).